Reading from the N-terminus, the 652-residue chain is Phosphomethylpyrimidine synthase (652 aa).

Residues Asn235, Met264, Tyr293, His329, 349–351, 390–393, and Glu429 contribute to the substrate site; these read SRG and DGMR. His433 contributes to the Zn(2+) binding site. Tyr456 serves as a coordination point for substrate. His497 provides a ligand contact to Zn(2+). [4Fe-4S] cluster contacts are provided by Cys577, Cys580, and Cys585.

Belongs to the ThiC family. In terms of assembly, homodimer. The cofactor is [4Fe-4S] cluster.

It carries out the reaction 5-amino-1-(5-phospho-beta-D-ribosyl)imidazole + S-adenosyl-L-methionine = 4-amino-2-methyl-5-(phosphooxymethyl)pyrimidine + CO + 5'-deoxyadenosine + formate + L-methionine + 3 H(+). Its pathway is cofactor biosynthesis; thiamine diphosphate biosynthesis. Its function is as follows. Catalyzes the synthesis of the hydroxymethylpyrimidine phosphate (HMP-P) moiety of thiamine from aminoimidazole ribotide (AIR) in a radical S-adenosyl-L-methionine (SAM)-dependent reaction. The protein is Phosphomethylpyrimidine synthase of Shewanella sediminis (strain HAW-EB3).